Consider the following 817-residue polypeptide: LPS-assembly protein LptD (817 aa).

Positions 1 to 45 (MDRLPLPHALHVPTHRPFAAPLPPRRLLARLAALMLCGVPLAVLA) are cleaved as a signal peptide.

Belongs to the LptD family. In terms of assembly, component of the lipopolysaccharide transport and assembly complex. Interacts with LptE and LptA.

The protein localises to the cell outer membrane. Together with LptE, is involved in the assembly of lipopolysaccharide (LPS) at the surface of the outer membrane. This is LPS-assembly protein LptD from Acidovorax sp. (strain JS42).